The primary structure comprises 439 residues: Trigger factor (439 aa).

The PPIase FKBP-type domain maps to 158-233 (GDVINIEYTI…IKEVLKRTLM (76 aa)). The interval 410 to 439 (KEISADEPVEEQKEEEEKEEAGSENSENKE) is disordered. Acidic residues predominate over residues 414-428 (ADEPVEEQKEEEEKE).

The protein belongs to the FKBP-type PPIase family. Tig subfamily.

The protein localises to the cytoplasm. The catalysed reaction is [protein]-peptidylproline (omega=180) = [protein]-peptidylproline (omega=0). Functionally, involved in protein export. Acts as a chaperone by maintaining the newly synthesized protein in an open conformation. Functions as a peptidyl-prolyl cis-trans isomerase. The sequence is that of Trigger factor from Kosmotoga olearia (strain ATCC BAA-1733 / DSM 21960 / TBF 19.5.1).